Consider the following 130-residue polypeptide: Small ribosomal subunit protein uS8 (130 aa).

The protein belongs to the universal ribosomal protein uS8 family. Part of the 30S ribosomal subunit.

One of the primary rRNA binding proteins, it binds directly to 16S rRNA central domain where it helps coordinate assembly of the platform of the 30S subunit. The sequence is that of Small ribosomal subunit protein uS8 from Methanocorpusculum labreanum (strain ATCC 43576 / DSM 4855 / Z).